We begin with the raw amino-acid sequence, 239 residues long: Small ribosomal subunit protein uS3 (239 aa).

A KH type-2 domain is found at 39–107 (VRQVLRKKMS…SVHINVIEVR (69 aa)). The tract at residues 217–239 (KQDDISRGDRNADRSSRRSREVR) is disordered.

The protein belongs to the universal ribosomal protein uS3 family. As to quaternary structure, part of the 30S ribosomal subunit. Forms a tight complex with proteins S10 and S14.

Its function is as follows. Binds the lower part of the 30S subunit head. Binds mRNA in the 70S ribosome, positioning it for translation. The polypeptide is Small ribosomal subunit protein uS3 (Xylella fastidiosa (strain 9a5c)).